Here is a 726-residue protein sequence, read N- to C-terminus: AP-1 complex subunit beta-1 (726 aa).

It belongs to the adaptor complexes large subunit family. Adaptor protein complex 1 (AP-1) is a heterotetramer composed of two large adaptins (gamma-type subunit APL4 and beta-type subunit APL2), a medium adaptin (mu-type subunit APM1) and a small adaptin (sigma-type subunit APS1). Interacts with CHC1. Interacts with APM2, probably forming an alternative AP-1-like complex.

Its subcellular location is the cell membrane. The protein resides in the membrane. It is found in the coated pit. Functionally, adaptins are components of the adaptor complexes which link clathrin to receptors in coated vesicles. Clathrin-associated protein complexes are believed to interact with the cytoplasmic tails of membrane proteins, leading to their selection and concentration. The AP-1 complex interacts directly with clathrin. This is AP-1 complex subunit beta-1 (APL2) from Saccharomyces cerevisiae (strain ATCC 204508 / S288c) (Baker's yeast).